Here is a 600-residue protein sequence, read N- to C-terminus: Single-strand DNA endonuclease 1 (600 aa).

The interval 1–97 (MGVKYLWDVL…KRRLKARFEI (97 aa)) is N-domain. The tract at residues 2 to 97 (GVKYLWDVLE…KRRLKARFEI (96 aa)) is XPG-N domain. The Mg(2+) site is built by Asp30, Asp76, Glu142, Glu144, Asp163, Asp165, and Asp215. The interval 130–215 (STLGILCLDG…IALALLLGSD (86 aa)) is XPG-I domain. 2 I-domain regions span residues 130–218 (STLG…DYSQ) and 130–219 (STLG…YSQG). The interval 215–353 (DYSQGVRGLR…ILPKVAERNL (139 aa)) is 5'-3' exonuclease domain. The segment at 433 to 458 (MAAKKKKPKPKQKQKETSSPTKSSSL) is disordered. The segment covering 435–444 (AKKKKPKPKQ) has biased composition (basic residues).

This sequence belongs to the XPG/RAD2 endonuclease family. GEN subfamily. Mg(2+) serves as cofactor.

The protein localises to the nucleus. Endonuclease which cleaves flap structures at the junction between single-stranded DNA and double-stranded DNA with a specific cleavage site in the 5' overhang strand exactly one nucleotide 3' of the branch point. Structure- and sequence-specific nuclease that resolves holliday junctions (HJs) by symmetrically oriented incisions in two opposing strands near the junction point, thus leading to ligatable products; HJs are physical links between homologous DNA molecules that arise as central intermediary structures during homologous recombination and repair in meiotic and somatic cells. Structure-specific nuclease with 5'-flap endonuclease activity, preferentially cleaving static flaps 5' overhang strand exactly one nucleotide in the 3' direction of the branch point and, to lower extent, on the two neighboring positions. Also able to cleave double-stranded flap strand 1 one nucleotide in the 3' direction of the branch point. Together with MUS81, essential for the resolution of toxic replication structures to ensure genome stability, and to maintain telomere integrity and replication. The protein is Single-strand DNA endonuclease 1 of Arabidopsis thaliana (Mouse-ear cress).